The chain runs to 304 residues: Cell surface-binding protein OPG105 (304 aa).

The Alpha-carbonic anhydrase domain occupies 1-235 (MPQQLSPINI…NDDTQVYYSG (235 aa)). Topologically, residues 1–275 (MPQQLSPINI…YQKYIEENKT (275 aa)) are virion surface. A helical membrane pass occupies residues 276–294 (FAIIAIVFVFILTAILFFM). The Intravirion portion of the chain corresponds to 295 to 304 (SRRYSREKQN).

The protein belongs to the alpha-carbonic anhydrase family. In terms of assembly, homodimer; disulfide-linked. Post-translationally, apparently non-glycosylated.

The protein localises to the virion membrane. In terms of biological role, binds to chondroitin sulfate on the cell surface to provide virion attachment to target cell. The polypeptide is Cell surface-binding protein OPG105 (OPG105) (Homo sapiens (Human)).